A 433-amino-acid chain; its full sequence is DNA polymerase processivity factor (433 aa).

A disordered region spans residues 274-433; that stretch reads RGDPFDKNYV…VPNTKKQKCG (160 aa). Composition is skewed to gly residues over residues 289–298, 325–336, and 344–359; these read SRGGGGGGGS, GLGGLGGGGGGG, and GGGG…GGGG. Residues 360 to 376 show a composition bias toward basic and acidic residues; that stretch reads GDHDHGLSSKEKYEQHK. A compositionally biased stretch (gly residues) spans 385-398; the sequence is GGSGGGGGGGGGGL. K410 is covalently cross-linked (Glycyl lysine isopeptide (Lys-Gly) (interchain with G-Cter in host SUMO1)). A phosphoserine mark is found at S413, S415, and S418.

This sequence belongs to the herpesviridae polymerase accessory protein family. Forms homodimers. Interacts with host SMARCB1. Interacts with host NCL/nucleolin; this interaction is important for the organization of proteins within viral replication compartments. Interacts with UL112/UL113; this interaction is necessary for efficient viral DNA replication. Interacts with UL84. Interacts with the uracil DNA glycosylase UL114. Interacts with the DNA polymerase catalytic subunit UL54. Interacts with host IRF3. Interacts with host RELA. Post-translationally, phosphorylated by UL97 on serine residues, phosphorylation seems important for UL44 nuclear entry but does not directly affect its role in replication. Sumoylated. Sumoylation on Lys-410 increases viral DNA replication.

It is found in the virion. It localises to the host nucleus. In terms of biological role, accessory subunit of the DNA polymerase that plays an essential role in viral DNA replication and acts by increasing the processivity of polymerization. Forms dimers that binds to double-stranded DNA and UL54 specifically to stimulates long chain DNA synthesis efficiently. Plays an important role in maintaining the structure of viral replication compartments by interacting with host nucleolin/NUC. In addition, suppresses innate immune responses through effects on host IRF3 and NF-kappa-B. Mechanistically, interfere with the binding of IRF3 and the p65 NF-kappa-B subunit to the promoters of antiviral genes, thereby inhibiting the expression of these genes. This Homo sapiens (Human) protein is DNA polymerase processivity factor (UL44).